Here is a 123-residue protein sequence, read N- to C-terminus: Small ribosomal subunit protein uS17 (123 aa).

Belongs to the universal ribosomal protein uS17 family. In terms of assembly, part of the 30S ribosomal subunit.

Functionally, one of the primary rRNA binding proteins, it binds specifically to the 5'-end of 16S ribosomal RNA. This chain is Small ribosomal subunit protein uS17, found in Pyrobaculum aerophilum (strain ATCC 51768 / DSM 7523 / JCM 9630 / CIP 104966 / NBRC 100827 / IM2).